A 79-amino-acid chain; its full sequence is Secretory calcium-binding phosphoprotein proline-glutamine rich 1 (79 aa).

Positions 1 to 15 are cleaved as a signal peptide; that stretch reads MKFLILAGLLSTATA.

The protein resides in the secreted. Functionally, tooth-associated epithelia protein that may participate in structuring the basal lamina at cell-tooth interface. In Homo sapiens (Human), this protein is Secretory calcium-binding phosphoprotein proline-glutamine rich 1.